A 398-amino-acid chain; its full sequence is Phosphoglycerate kinase (398 aa).

Residues 21–23 (DFN), Arg36, 59–62 (HLGR), Arg119, and Arg157 each bind substrate. ATP-binding positions include Lys208, Gly296, Glu327, and 354–357 (GGDS).

The protein belongs to the phosphoglycerate kinase family. As to quaternary structure, monomer.

Its subcellular location is the cytoplasm. It carries out the reaction (2R)-3-phosphoglycerate + ATP = (2R)-3-phospho-glyceroyl phosphate + ADP. It participates in carbohydrate degradation; glycolysis; pyruvate from D-glyceraldehyde 3-phosphate: step 2/5. In Streptococcus agalactiae serotype Ia (strain ATCC 27591 / A909 / CDC SS700), this protein is Phosphoglycerate kinase.